Consider the following 92-residue polypeptide: DNA-directed RNA polymerase subunit omega (92 aa).

It belongs to the RNA polymerase subunit omega family. As to quaternary structure, the RNAP catalytic core consists of 2 alpha, 1 beta, 1 beta' and 1 omega subunit. When a sigma factor is associated with the core the holoenzyme is formed, which can initiate transcription.

It catalyses the reaction RNA(n) + a ribonucleoside 5'-triphosphate = RNA(n+1) + diphosphate. Its function is as follows. Promotes RNA polymerase assembly. Latches the N- and C-terminal regions of the beta' subunit thereby facilitating its interaction with the beta and alpha subunits. The protein is DNA-directed RNA polymerase subunit omega of Acinetobacter baumannii (strain AB307-0294).